The chain runs to 75 residues: Theromacin (75 aa).

Disulfide bonds link Cys2-Cys9, Cys24-Cys28, Cys31-Cys73, Cys39-Cys47, and Cys57-Cys59.

The protein belongs to the macin family.

It is found in the secreted. In terms of biological role, has a bactericial activity. This chain is Theromacin, found in Hirudo medicinalis (Medicinal leech).